The following is a 198-amino-acid chain: uncharacterized protein (198 aa).

A disordered region spans residues 40–111 (GSALPPQAPT…LSRGAGQGAP (72 aa)). Over residues 60–74 (SSRTPGPRPPRSTLR) the composition is skewed to low complexity.

This is an uncharacterized protein from Homo sapiens (Human).